Here is an 85-residue protein sequence, read N- to C-terminus: UPF0297 protein CLL_A1175 (85 aa).

This sequence belongs to the UPF0297 family.

The protein is UPF0297 protein CLL_A1175 of Clostridium botulinum (strain Eklund 17B / Type B).